Here is a 93-residue protein sequence, read N- to C-terminus: MPRSLKKGPFVDQHLFVKVDRENEKGTKNVIKTWSRRSMIIPDMLGHTIAVHDGRKHIPVFVTESMVGHKLGEFAPTRTFRGHVKDDRKGKRR.

This sequence belongs to the universal ribosomal protein uS19 family.

Its function is as follows. Protein S19 forms a complex with S13 that binds strongly to the 16S ribosomal RNA. The chain is Small ribosomal subunit protein uS19 from Arthrobacter sp. (strain FB24).